The primary structure comprises 251 residues: Hydroxyacylglutathione hydrolase (251 aa).

H53, H55, D57, H58, H110, D127, and H165 together coordinate Zn(2+).

It belongs to the metallo-beta-lactamase superfamily. Glyoxalase II family. In terms of assembly, monomer. Zn(2+) serves as cofactor.

The catalysed reaction is an S-(2-hydroxyacyl)glutathione + H2O = a 2-hydroxy carboxylate + glutathione + H(+). It functions in the pathway secondary metabolite metabolism; methylglyoxal degradation; (R)-lactate from methylglyoxal: step 2/2. Functionally, thiolesterase that catalyzes the hydrolysis of S-D-lactoyl-glutathione to form glutathione and D-lactic acid. The chain is Hydroxyacylglutathione hydrolase from Escherichia coli O17:K52:H18 (strain UMN026 / ExPEC).